We begin with the raw amino-acid sequence, 159 residues long: MARFPITIKGFHKLEQELKHLKYVERLKITTDISTAREFGDLSENAEYKAAKERQLLNDKKIYDLENKLANAEVIEITKINSNSVKFGARVVLLDRDTEKEVVYQIVGEYEADITQNLISIASPIAQALIGKKAGDIIEVITPKGGRFYELLKVQYVDF.

This sequence belongs to the GreA/GreB family.

In terms of biological role, necessary for efficient RNA polymerase transcription elongation past template-encoded arresting sites. The arresting sites in DNA have the property of trapping a certain fraction of elongating RNA polymerases that pass through, resulting in locked ternary complexes. Cleavage of the nascent transcript by cleavage factors such as GreA or GreB allows the resumption of elongation from the new 3'terminus. GreA releases sequences of 2 to 3 nucleotides. The polypeptide is Transcription elongation factor GreA (Orientia tsutsugamushi (strain Ikeda) (Rickettsia tsutsugamushi)).